A 98-amino-acid polypeptide reads, in one-letter code: NADH-ubiquinone oxidoreductase chain 4L (98 aa).

Transmembrane regions (helical) follow at residues 1 to 21 (MSMVYINIFLAFTMSLMGLLM), 29 to 49 (SLLCLEGMMLSLFIMMAVAIL), and 61 to 81 (IILLVFAACEAALGLSLLVMV).

This sequence belongs to the complex I subunit 4L family. As to quaternary structure, core subunit of respiratory chain NADH dehydrogenase (Complex I) which is composed of 45 different subunits.

The protein resides in the mitochondrion inner membrane. It catalyses the reaction a ubiquinone + NADH + 5 H(+)(in) = a ubiquinol + NAD(+) + 4 H(+)(out). Functionally, core subunit of the mitochondrial membrane respiratory chain NADH dehydrogenase (Complex I) which catalyzes electron transfer from NADH through the respiratory chain, using ubiquinone as an electron acceptor. Part of the enzyme membrane arm which is embedded in the lipid bilayer and involved in proton translocation. This is NADH-ubiquinone oxidoreductase chain 4L (MT-ND4L) from Puma concolor (Mountain lion).